The following is a 56-amino-acid chain: Ovomucoid (56 aa).

Positions 6-56 constitute a Kazal-like domain; the sequence is VDCSEYPKPACTLEYRPLCGSDSKTYANKCNFCNAVVESNGTLTLSHFGKC. 3 disulfide bridges follow: Cys8–Cys38, Cys16–Cys35, and Cys24–Cys56. A glycan (N-linked (GlcNAc...) asparagine) is linked at Asn45.

Its subcellular location is the secreted. In Oreortyx pictus (Mountain quail), this protein is Ovomucoid.